The chain runs to 66 residues: Protein translocase subunit SecE (66 aa).

Residues 29 to 49 (LVASTLVVVVAVFIFSLICLV) form a helical membrane-spanning segment.

This sequence belongs to the SecE/SEC61-gamma family. In terms of assembly, component of the Sec protein translocase complex. Heterotrimer consisting of SecY, SecE and SecG subunits. The heterotrimers can form oligomers, although 1 heterotrimer is thought to be able to translocate proteins. Interacts with the ribosome. Interacts with SecDF, and other proteins may be involved. Interacts with SecA.

The protein resides in the cell inner membrane. Functionally, essential subunit of the Sec protein translocation channel SecYEG. Clamps together the 2 halves of SecY. May contact the channel plug during translocation. This chain is Protein translocase subunit SecE, found in Rickettsia felis (strain ATCC VR-1525 / URRWXCal2) (Rickettsia azadi).